The sequence spans 513 residues: V-type proton ATPase subunit B (513 aa).

Arg375 contacts ATP. Basic and acidic residues predominate over residues 484-503 (ADRKGKGKDKPTTKDTRDTA). The interval 484 to 513 (ADRKGKGKDKPTTKDTRDTAAPEEENLIDA) is disordered. The span at 504–513 (APEEENLIDA) shows a compositional bias: acidic residues.

The protein belongs to the ATPase alpha/beta chains family. In terms of assembly, V-ATPase is a heteromultimeric enzyme composed of a peripheral catalytic V1 complex (components A to H) attached to an integral membrane V0 proton pore complex (components: a, c, c', c'', d, e, f and VOA1).

Its subcellular location is the vacuole membrane. Non-catalytic subunit of the V1 complex of vacuolar(H+)-ATPase (V-ATPase), a multisubunit enzyme composed of a peripheral complex (V1) that hydrolyzes ATP and a membrane integral complex (V0) that translocates protons. V-ATPase is responsible for acidifying and maintaining the pH of intracellular compartments. This chain is V-type proton ATPase subunit B, found in Neurospora crassa (strain ATCC 24698 / 74-OR23-1A / CBS 708.71 / DSM 1257 / FGSC 987).